We begin with the raw amino-acid sequence, 82 residues long: Photosystem I iron-sulfur center (82 aa).

4Fe-4S ferredoxin-type domains follow at residues 2 to 31 (AHTVKIYDTCIGCTQCVRACPTDVLEMVPW) and 40 to 69 (IAAAPRTEDCVGCKRCETACPTDFLSIRVY). Positions 11, 14, 17, 21, 49, 52, 55, and 59 each coordinate [4Fe-4S] cluster.

As to quaternary structure, the cyanobacterial PSI reaction center is composed of one copy each of PsaA,B,C,D,E,F,I,J,K,L,M and X, and forms trimeric complexes. [4Fe-4S] cluster is required as a cofactor.

It localises to the cellular thylakoid membrane. It carries out the reaction reduced [plastocyanin] + hnu + oxidized [2Fe-2S]-[ferredoxin] = oxidized [plastocyanin] + reduced [2Fe-2S]-[ferredoxin]. Functionally, apoprotein for the two 4Fe-4S centers FA and FB of photosystem I (PSI); essential for photochemical activity. FB is the terminal electron acceptor of PSI, donating electrons to ferredoxin. The C-terminus interacts with PsaA/B/D and helps assemble the protein into the PSI complex. Required for binding of PsaD and PsaE to PSI. PSI is a plastocyanin/cytochrome c6-ferredoxin oxidoreductase, converting photonic excitation into a charge separation, which transfers an electron from the donor P700 chlorophyll pair to the spectroscopically characterized acceptors A0, A1, FX, FA and FB in turn. This is Photosystem I iron-sulfur center from Synechococcus sp. (strain JA-3-3Ab) (Cyanobacteria bacterium Yellowstone A-Prime).